Consider the following 396-residue polypeptide: Tryptophan synthase beta chain (396 aa).

K88 bears the N6-(pyridoxal phosphate)lysine mark.

It belongs to the TrpB family. As to quaternary structure, tetramer of two alpha and two beta chains. Pyridoxal 5'-phosphate is required as a cofactor.

The enzyme catalyses (1S,2R)-1-C-(indol-3-yl)glycerol 3-phosphate + L-serine = D-glyceraldehyde 3-phosphate + L-tryptophan + H2O. It participates in amino-acid biosynthesis; L-tryptophan biosynthesis; L-tryptophan from chorismate: step 5/5. The beta subunit is responsible for the synthesis of L-tryptophan from indole and L-serine. The polypeptide is Tryptophan synthase beta chain (Shewanella sp. (strain W3-18-1)).